The sequence spans 273 residues: NAD(P)H-hydrate epimerase (273 aa).

The 240-residue stretch at 18–257 folds into the YjeF N-terminal domain; that stretch reads ALKLDEDLIN…LLAMEYDVQE (240 aa). 71 to 75 contacts (6S)-NADPHX; sequence NNGGD. 2 residues coordinate K(+): asparagine 72 and aspartate 146. (6S)-NADPHX contacts are provided by residues 150 to 157, tyrosine 162, and aspartate 188; that span reads GFSFHGGP. A K(+)-binding site is contributed by serine 191.

Belongs to the NnrE/AIBP family. The cofactor is K(+).

It carries out the reaction (6R)-NADHX = (6S)-NADHX. It catalyses the reaction (6R)-NADPHX = (6S)-NADPHX. Its function is as follows. Catalyzes the epimerization of the S- and R-forms of NAD(P)HX, a damaged form of NAD(P)H that is a result of enzymatic or heat-dependent hydration. This is a prerequisite for the S-specific NAD(P)H-hydrate dehydratase to allow the repair of both epimers of NAD(P)HX. In Giardia intestinalis (strain ATCC 50803 / WB clone C6) (Giardia lamblia), this protein is NAD(P)H-hydrate epimerase.